A 225-amino-acid chain; its full sequence is UPF0758 protein Swoo_4561 (225 aa).

In terms of domain architecture, MPN spans Ile102 to Ile224. Positions 173, 175, and 186 each coordinate Zn(2+). Residues His173 to Asp186 carry the JAMM motif motif.

The protein belongs to the UPF0758 family.

The chain is UPF0758 protein Swoo_4561 from Shewanella woodyi (strain ATCC 51908 / MS32).